Reading from the N-terminus, the 155-residue chain is MKSADQLMSDIQLSLQALFQKIQPEMLESMEKQGVTPAQLFVLASLKKHGSLKVSEIAERMEVKPSAVTLMADRLEQKNLIARTHNTKDRRVIDLSLTDEGDIKFEEVLAGRKAIMARYLSFLTEEEMLQAAHITAKLAQAAETDEKQNMKRGNG.

The 137-residue stretch at 4–140 (ADQLMSDIQL…AAHITAKLAQ (137 aa)) folds into the HTH marR-type domain. A DNA-binding region (H-T-H motif) is located at residues 54–77 (VSEIAERMEVKPSAVTLMADRLEQ).

As to quaternary structure, homodimer.

It is found in the cytoplasm. With respect to regulation, the binding of MdtR to the mdtRP promoter region is severely inhibited by adding excess concentrations of fusidic acid or novobiocin but not by actinomycin or streptomycin. Functionally, repressor of the multidrug resistance operon mdtRP. Acts by binding directly to the mdtRP promoter region, leading to the repression of its expression. The sequence is that of HTH-type transcriptional repressor MdtR from Bacillus subtilis (strain 168).